A 485-amino-acid polypeptide reads, in one-letter code: MDYEAIIGLEVHVQLKTQTKLFCGCAVEYGATPNSRVCPVCLGLPGALPSPNKEAIILTIQTGLMLGSEIARRGKFDRKNYFYPDMPKNYQISQYDQPLCKGGSVQLYPLAFPKDAQKDPQAQERKKIRIVRVHLEEDVGKSFHFDENSGIDFNRAGTPLMEIVSEADIRSPEEAFAYLSALRQILRYGNVSDCDMEKGQLRCDVNVSVKPAGEKKWGTKCEIKNLNSISAVRKALKYEIQRQIHVLSTGSKISQETLRWDDLRGQTVPMRTKEYAHDYRYFPDPDLLTVVTEGELVAEAKKRIPELPEQKKQRLCEVYRLNEYQSSVLASDPQLADYFEKAASTASNKVAVANFLINDYLAVASDLETAVPIPAEYFSELSNLVEQGKLHMKQAKEIVKVMVAEKKSPAAIVQEQGIGQITSVEVLQGLCREAIEANPKSVSDYRSGKLAALNALKGYVMKKTKGQANPQIVHDLLEKTLKETG.

Belongs to the GatB/GatE family. GatB subfamily. Heterotrimer of A, B and C subunits.

The enzyme catalyses L-glutamyl-tRNA(Gln) + L-glutamine + ATP + H2O = L-glutaminyl-tRNA(Gln) + L-glutamate + ADP + phosphate + H(+). The catalysed reaction is L-aspartyl-tRNA(Asn) + L-glutamine + ATP + H2O = L-asparaginyl-tRNA(Asn) + L-glutamate + ADP + phosphate + 2 H(+). In terms of biological role, allows the formation of correctly charged Asn-tRNA(Asn) or Gln-tRNA(Gln) through the transamidation of misacylated Asp-tRNA(Asn) or Glu-tRNA(Gln) in organisms which lack either or both of asparaginyl-tRNA or glutaminyl-tRNA synthetases. The reaction takes place in the presence of glutamine and ATP through an activated phospho-Asp-tRNA(Asn) or phospho-Glu-tRNA(Gln). The sequence is that of Aspartyl/glutamyl-tRNA(Asn/Gln) amidotransferase subunit B from Methylacidiphilum infernorum (isolate V4) (Methylokorus infernorum (strain V4)).